Here is a 554-residue protein sequence, read N- to C-terminus: Dihydroxy-acid dehydratase (554 aa).

A Mg(2+)-binding site is contributed by Asp78. [2Fe-2S] cluster is bound at residue Cys119. Mg(2+) contacts are provided by Asp120 and Lys121. Position 121 is an N6-carboxylysine (Lys121). Residue Cys192 coordinates [2Fe-2S] cluster. Glu443 serves as a coordination point for Mg(2+). The active-site Proton acceptor is the Ser469.

The protein belongs to the IlvD/Edd family. In terms of assembly, homodimer. It depends on [2Fe-2S] cluster as a cofactor. Mg(2+) is required as a cofactor.

The enzyme catalyses (2R)-2,3-dihydroxy-3-methylbutanoate = 3-methyl-2-oxobutanoate + H2O. It catalyses the reaction (2R,3R)-2,3-dihydroxy-3-methylpentanoate = (S)-3-methyl-2-oxopentanoate + H2O. It participates in amino-acid biosynthesis; L-isoleucine biosynthesis; L-isoleucine from 2-oxobutanoate: step 3/4. The protein operates within amino-acid biosynthesis; L-valine biosynthesis; L-valine from pyruvate: step 3/4. Functionally, functions in the biosynthesis of branched-chain amino acids. Catalyzes the dehydration of (2R,3R)-2,3-dihydroxy-3-methylpentanoate (2,3-dihydroxy-3-methylvalerate) into 2-oxo-3-methylpentanoate (2-oxo-3-methylvalerate) and of (2R)-2,3-dihydroxy-3-methylbutanoate (2,3-dihydroxyisovalerate) into 2-oxo-3-methylbutanoate (2-oxoisovalerate), the penultimate precursor to L-isoleucine and L-valine, respectively. This Clostridium novyi (strain NT) protein is Dihydroxy-acid dehydratase.